Consider the following 510-residue polypeptide: MSKRALISVSDKTNIIEFAKGLKESGFEILSTGGTLRSIAEAGIDVTPVDEVTGFPEMLDGRVKTLHPMIHGGLLGKRSNHEHLSQMEEHGIRSIDLVAVNLYPFKETVQKPDVSHQDIIENIDIGGPSMLRSAAKNFEDVLVVTGPTDYNRVLAAITSETDTYEFRQQLAAKVFRHTASYDAMIANYFLSQTEEQYPESYTVTYEKVQDLRYGENPHQQAAFYKEPIQSRPTLATAKQLHGKELSYNNIQDTNAAIEIVKEFAEPAAVAVKHMNPCGIGIGESISTAFERAYQADPTSIFGGIVACNRPVDAATAEQLSQIFLEIVVAPSFESQALEILTQKKNIRLLELDVTSDNKQSNRLTTVDGGALIQAYDAKEVSEADLEVVTNKQPTEQEINDMLFAWKAVKHVKSNAIVLAKDSQTIGVGAGQMNRIGAAEIAIKQAGDKSEGAVLASDAFFPMPDTVEAAAKAGIKAIIQPGGSKRDQDSVDVCNQFGIAMVYTKVRHFKH.

The MGS-like domain occupies 1 to 145 (MSKRALISVS…KNFEDVLVVT (145 aa)).

It belongs to the PurH family.

It catalyses the reaction (6R)-10-formyltetrahydrofolate + 5-amino-1-(5-phospho-beta-D-ribosyl)imidazole-4-carboxamide = 5-formamido-1-(5-phospho-D-ribosyl)imidazole-4-carboxamide + (6S)-5,6,7,8-tetrahydrofolate. It carries out the reaction IMP + H2O = 5-formamido-1-(5-phospho-D-ribosyl)imidazole-4-carboxamide. It participates in purine metabolism; IMP biosynthesis via de novo pathway; 5-formamido-1-(5-phospho-D-ribosyl)imidazole-4-carboxamide from 5-amino-1-(5-phospho-D-ribosyl)imidazole-4-carboxamide (10-formyl THF route): step 1/1. Its pathway is purine metabolism; IMP biosynthesis via de novo pathway; IMP from 5-formamido-1-(5-phospho-D-ribosyl)imidazole-4-carboxamide: step 1/1. This Oceanobacillus iheyensis (strain DSM 14371 / CIP 107618 / JCM 11309 / KCTC 3954 / HTE831) protein is Bifunctional purine biosynthesis protein PurH.